The primary structure comprises 307 residues: Cyclooctat-9-en-7-ol synthase (307 aa).

Residues D110, N220, S224, and E228 each contribute to the Mg(2+) site. A DDXXD motif; degenerate motif is present at residues 110–113; it reads DDMD. Residues 220-228 carry the NSE/DTE motif motif; it reads NDFYSYDRE.

This sequence belongs to the terpene synthase family. As to quaternary structure, homodimer. Mg(2+) is required as a cofactor.

The catalysed reaction is geranylgeranyl diphosphate + H2O = cyclooctat-9-en-7-ol + diphosphate. Functionally, catalyzes the cyclization of the linear isoprenoid intermediate geranylgeranyl diphosphate to tricycclic cyclooctat-9-en-7-ol in the cyclooctatin biosynthesis pathway. Cyclooctatin is a potent inhibitor of lysophospholipase. This Streptomyces melanosporofaciens protein is Cyclooctat-9-en-7-ol synthase.